A 289-amino-acid chain; its full sequence is Alpha-soluble NSF attachment protein (289 aa).

A TPR repeat occupies 112-145 (GKYYKEIAELYELEQNFEQAIIYFEKAADIYQSE).

Belongs to the SNAP family.

The protein localises to the membrane. Required for vesicular transport between the endoplasmic reticulum and the Golgi apparatus. This Vitis vinifera (Grape) protein is Alpha-soluble NSF attachment protein.